Here is a 93-residue protein sequence, read N- to C-terminus: MVTPREPKKRTTRKKKDPNAPKRALSAYMFFANENRDIVRSENPDITFGQVGKKLGEKWKALTPEEKQPYEAKAQADKKRYESEKELYNATLA.

2 disordered regions span residues 1–23 and 69–93; these read MVTP…APKR and PYEA…ATLA. Basic residues predominate over residues 7–16; sequence PKKRTTRKKK. The segment at residues 21 to 89 is a DNA-binding region (HMG box); it reads PKRALSAYMF…RYESEKELYN (69 aa). A compositionally biased stretch (basic and acidic residues) spans 69 to 87; the sequence is PYEAKAQADKKRYESEKEL.

This sequence belongs to the NHP6 family. Weakly associates with the stable SPT16-POB3 heterodimer to form the FACT (yFACT or SNP) complex, which is associated with nucleosomes. Multiple molecules of NHP6 (NHP6A and/or NHP6B) are required to recruit the SPT16-POB3 heterodimer to DNA.

The protein resides in the nucleus. The protein localises to the chromosome. Its function is as follows. DNA-binding protein that induces severe bending of DNA. Required for DNA-binding by the FACT complex, a general chromatin factor that acts to reorganize nucleosomes. The FACT complex is involved in multiple processes that require DNA as a template such as mRNA elongation, DNA replication and DNA repair. Also augments the fidelity of transcription by RNA polymerase III independently of any role in the FACT complex. Required for transcriptional initiation fidelity of some but not all tRNA genes. Seems to be functionally redundant with NHP6B. The protein is Non-histone chromosomal protein 6A (NHP6A) of Saccharomyces cerevisiae (strain ATCC 204508 / S288c) (Baker's yeast).